The following is a 206-amino-acid chain: Protein MIS12 homolog (206 aa).

A coiled-coil region spans residues 102–206 (DKCQETNPFS…EKESRRLETQ (105 aa)).

The protein belongs to the mis12 family. As to quaternary structure, component of the MIS12 complex composed of MIS12, DSN1, NSL1 and PMF1. Also interacts with KNL1, CBX3, CBX5, NDC80 and ZWINT.

It localises to the chromosome. The protein resides in the centromere. The protein localises to the kinetochore. Part of the MIS12 complex which is required for normal chromosome alignment and segregation and for kinetochore formation during mitosis. Essential for proper kinetochore microtubule attachments. The polypeptide is Protein MIS12 homolog (Mus musculus (Mouse)).